The following is a 297-amino-acid chain: N-acetylneuraminate lyase (297 aa).

The aceneuramate site is built by S47 and T48. Y137 acts as the Proton donor in catalysis. K165 acts as the Schiff-base intermediate with substrate in catalysis. Aceneuramate is bound by residues T167, G189, D191, E192, and S208.

This sequence belongs to the DapA family. NanA subfamily. Homotetramer.

The protein resides in the cytoplasm. The catalysed reaction is aceneuramate = aldehydo-N-acetyl-D-mannosamine + pyruvate. Its pathway is amino-sugar metabolism; N-acetylneuraminate degradation; D-fructose 6-phosphate from N-acetylneuraminate: step 1/5. In terms of biological role, catalyzes the reversible aldol cleavage of N-acetylneuraminic acid (sialic acid; Neu5Ac) to form pyruvate and N-acetylmannosamine (ManNAc) via a Schiff base intermediate. This chain is N-acetylneuraminate lyase, found in Escherichia coli (strain SMS-3-5 / SECEC).